Reading from the N-terminus, the 257-residue chain is Non-homologous end joining protein Ku (257 aa).

The 176-residue stretch at 9 to 184 (TFGMVAIPIG…YTKPEVNEQE (176 aa)) folds into the Ku domain.

It belongs to the prokaryotic Ku family. In terms of assembly, homodimer. Interacts with LigD.

With LigD forms a non-homologous end joining (NHEJ) DNA repair enzyme, which repairs dsDNA breaks with reduced fidelity. Binds linear dsDNA with 5'- and 3'- overhangs but not closed circular dsDNA nor ssDNA. Recruits and stimulates the ligase activity of LigD. This chain is Non-homologous end joining protein Ku, found in Lachnoclostridium phytofermentans (strain ATCC 700394 / DSM 18823 / ISDg) (Clostridium phytofermentans).